Reading from the N-terminus, the 367-residue chain is Sigma54-dependent transcriptional regulator SfnR (367 aa).

Positions 21 to 250 (QVFEDPKSQA…LENVIHHTLL (230 aa)) constitute a Sigma-54 factor interaction domain. Residues 49 to 56 (GETGTGKE) and 112 to 121 (ADGGTLFLDE) each bind ATP.

In terms of biological role, involved in the dimethyl sulfide degradation pathway. Activates the expression of sfnG and sfnF. This Pseudomonas fluorescens (strain Pf0-1) protein is Sigma54-dependent transcriptional regulator SfnR.